Here is a 122-residue protein sequence, read N- to C-terminus: Small ribosomal subunit protein uS13 (122 aa).

The disordered stretch occupies residues 93-122 (RRSLPVRGQRTHTNARTRKGPAKPIAGKKK).

This sequence belongs to the universal ribosomal protein uS13 family. In terms of assembly, part of the 30S ribosomal subunit. Forms a loose heterodimer with protein S19. Forms two bridges to the 50S subunit in the 70S ribosome.

Its function is as follows. Located at the top of the head of the 30S subunit, it contacts several helices of the 16S rRNA. In the 70S ribosome it contacts the 23S rRNA (bridge B1a) and protein L5 of the 50S subunit (bridge B1b), connecting the 2 subunits; these bridges are implicated in subunit movement. Contacts the tRNAs in the A and P-sites. This Chelativorans sp. (strain BNC1) protein is Small ribosomal subunit protein uS13.